The sequence spans 509 residues: Maturase K (509 aa).

Belongs to the intron maturase 2 family. MatK subfamily.

It is found in the plastid. The protein localises to the chloroplast. Functionally, usually encoded in the trnK tRNA gene intron. Probably assists in splicing its own and other chloroplast group II introns. This chain is Maturase K, found in Austrocylindropuntia vestita (Cactus).